The sequence spans 339 residues: Putative P2Y purinoceptor 10 (339 aa).

At 1-39 the chain is on the extracellular side; it reads MANLDKYTETFKMGSNSTSTAEIYCNVTNVKFQYSLYAT. N-linked (GlcNAc...) asparagine glycans are attached at residues Asn16 and Asn26. Residues 40–60 traverse the membrane as a helical segment; the sequence is TYILIFIPGLLANSAALWVLC. The Cytoplasmic portion of the chain corresponds to 61–68; that stretch reads RFISKKNK. The chain crosses the membrane as a helical span at residues 69-89; that stretch reads AIIFMINLSVADLAHVLSLPL. Topologically, residues 90 to 103 are extracellular; that stretch reads RIYYYISHHWPFQR. The chain crosses the membrane as a helical span at residues 104–124; the sequence is ALCLLCFYLKYLNMYASICFL. Cys106 and Cys181 form a disulfide bridge. Residues 125–149 lie on the Cytoplasmic side of the membrane; the sequence is TCISLQRCFFLLKPFRARDWKRRYD. A helical transmembrane segment spans residues 150–170; that stretch reads VGISAAIWIVVGTACLPFPIL. The Extracellular segment spans residues 171-193; sequence RSTDLNNNKSCFADLGYKQMNAV. N-linked (GlcNAc...) asparagine glycosylation is present at Asn178. Residues 194-214 form a helical membrane-spanning segment; sequence ALVGMITVAELAGFVIPVIII. Residues 215–244 lie on the Cytoplasmic side of the membrane; sequence AWCTWKTTISLRQPPMAFQGISERQKALRM. Residues 245–265 form a helical membrane-spanning segment; the sequence is VFMCAAVFFICFTPYHINFIF. The Extracellular portion of the chain corresponds to 266-288; that stretch reads YTMVKETIISSCPVVRIALYFHP. A helical transmembrane segment spans residues 289–309; sequence FCLCLASLCCLLDPILYYFMA. Topologically, residues 310–339 are cytoplasmic; that stretch reads SEFRDQLSRHGSSVTRSRLMSKESGSSMIG.

This sequence belongs to the G-protein coupled receptor 1 family. As to expression, weakly expressed in blood leukocytes.

The protein localises to the cell membrane. In terms of biological role, putative receptor for purines coupled to G-proteins. This chain is Putative P2Y purinoceptor 10 (P2RY10), found in Homo sapiens (Human).